The primary structure comprises 589 residues: Phenylalanine--tRNA ligase beta subunit (589 aa).

One can recognise a B5 domain in the interval 302 to 379; it reads LPYRKEMVRA…IAYGYNNIQM (78 aa). The Mg(2+) site is built by D357, D363, E366, and D367.

It belongs to the phenylalanyl-tRNA synthetase beta subunit family. Type 2 subfamily. As to quaternary structure, heterotetramer; dimer of two heterodimers formed by FARSA and FARSB. Requires Mg(2+) as cofactor.

It is found in the cytoplasm. The enzyme catalyses tRNA(Phe) + L-phenylalanine + ATP = L-phenylalanyl-tRNA(Phe) + AMP + diphosphate + H(+). The sequence is that of Phenylalanine--tRNA ligase beta subunit (Farsb) from Mus musculus (Mouse).